We begin with the raw amino-acid sequence, 381 residues long: Protein TRIGALACTOSYLDIACYLGLYCEROL 2, chloroplastic (381 aa).

Residues 1–45 constitute a chloroplast transit peptide; sequence MIGNPVIQVPSSLMPSSSMIACPRVSPNGVPYLPPKPRTRHLVVR. Residues 46 to 96 are Stromal-facing; that stretch reads AASNSDAAHGQPSSDGGKNPLTVVLDVPRNIWRQTLKPLSDFGFGKRSIWE. Residues 97–117 traverse the membrane as a helical segment; that stretch reads GGVGLFIVSGATLLALSWAWL. The Chloroplast intermembrane segment spans residues 118–381; sequence RGFQMRSKFR…LLIKSLSRLL (264 aa).

In terms of assembly, homomultimer. Substrate-binding subunit of the TGD complex, a lipid translocator at the inner chloroplast envelope membrane made of TGD1, TGD2 and TGD3. Interacts with TGD1 and TGD3 with an overall subunit stoichiometry of 2 TGD1, 2 TGD3 and 8 to 12 TGD2. Interacts with TGD5.

The protein localises to the plastid. It is found in the chloroplast inner membrane. Its function is as follows. Component of a phosphatidic acid/lipid transport complex in the chloroplast envelope. Specifically binds phosphatidic acid (PA). Involved in lipid transfer from the endoplasmic reticulum (ER) to plastids, and necessary for thylakoids formation. This Arabidopsis thaliana (Mouse-ear cress) protein is Protein TRIGALACTOSYLDIACYLGLYCEROL 2, chloroplastic.